Reading from the N-terminus, the 433-residue chain is Serine--tRNA ligase (433 aa).

235-237 lines the L-serine pocket; it reads TSE. 266-268 provides a ligand contact to ATP; sequence RSE. Glu-289 contacts L-serine. 353 to 356 serves as a coordination point for ATP; sequence EISS. Ser-388 contributes to the L-serine binding site.

The protein belongs to the class-II aminoacyl-tRNA synthetase family. Type-1 seryl-tRNA synthetase subfamily. Homodimer. The tRNA molecule binds across the dimer.

The protein localises to the cytoplasm. The catalysed reaction is tRNA(Ser) + L-serine + ATP = L-seryl-tRNA(Ser) + AMP + diphosphate + H(+). The enzyme catalyses tRNA(Sec) + L-serine + ATP = L-seryl-tRNA(Sec) + AMP + diphosphate + H(+). It functions in the pathway aminoacyl-tRNA biosynthesis; selenocysteinyl-tRNA(Sec) biosynthesis; L-seryl-tRNA(Sec) from L-serine and tRNA(Sec): step 1/1. In terms of biological role, catalyzes the attachment of serine to tRNA(Ser). Is also able to aminoacylate tRNA(Sec) with serine, to form the misacylated tRNA L-seryl-tRNA(Sec), which will be further converted into selenocysteinyl-tRNA(Sec). The protein is Serine--tRNA ligase of Burkholderia ambifaria (strain MC40-6).